The chain runs to 1476 residues: Copper-transporting ATPase 1 (1476 aa).

Residues 1 to 642 lie on the Cytoplasmic side of the membrane; that stretch reads MEPSMDVNSV…HKREIKQWRS (642 aa). 2 HMA domains span residues 8-74 and 85-151; these read NSVT…FDAL and TDTL…LETG. Cu(+) contacts are provided by T18, C19, and C22. At T152 the chain carries Phosphothreonine. HMA domains lie at 171 to 237 and 276 to 342; these read VVLK…FPAF and STAT…PGQY. Cu(+)-binding residues include C182, C185, C287, and C290. Phosphothreonine is present on T326. A phosphoserine mark is found at S338, S352, S356, and S361. 3 consecutive HMA domains span residues 376–442, 478–544, and 554–620; these read QETV…FDAV, SKCY…FGAT, and GILK…FEAS. Cu(+)-binding residues include C387, C390, C489, C492, C565, and C568. The helical transmembrane segment at 643–665 threads the bilayer; the sequence is SFLVSLFFCTPVMGLMMYMMAME. 2 N-linked (GlcNAc...) asparagine glycosylation sites follow: N674 and N685. Helical transmembrane passes span 695–717, 736–760, and 770–788; these read ILPG…QFFG, MDVL…VAMY, and SFDT…RWLE. Residue N887 is glycosylated (N-linked (GlcNAc...) asparagine). The helical transmembrane segment at 930-952 threads the bilayer; it reads YFVPFIVLVSIATLLVWIIIGFQ. N-linked (GlcNAc...) asparagine glycosylation occurs at N953. Residues 978-998 form a helical membrane-spanning segment; the sequence is AFQASITVLCIACPCSLGLAT. The 4-aspartylphosphate intermediate role is filled by D1034. Residues N1130 and N1134 are each glycosylated (N-linked (GlcNAc...) asparagine). Transmembrane regions (helical) follow at residues 1347–1373 and 1379–1397; these read INFL…IGLV and GSAA…SLFL. Phosphoserine occurs at positions 1420 and 1422. N1448 is a glycosylation site (N-linked (GlcNAc...) asparagine). Phosphoserine occurs at positions 1450, 1453, 1456, 1459, 1463, 1466, and 1476.

This sequence belongs to the cation transport ATPase (P-type) (TC 3.A.3) family. As to quaternary structure, monomer. Interacts with PDZD11. Interacts with ATOX1 and COMMD1. Interacts with TYRP1. Directly interacts with SOD3; this interaction is copper-dependent and is required for SOD3 activity. As to expression, expressed in most tissues except liver.

It localises to the golgi apparatus. It is found in the trans-Golgi network membrane. The protein localises to the cell membrane. It catalyses the reaction Cu(+)(in) + ATP + H2O = Cu(+)(out) + ADP + phosphate + H(+). In terms of biological role, may function in the export of copper from the cytoplasm to an intracellular organelle. It may serve as well for the export of other metals. This chain is Copper-transporting ATPase 1 (ATP7A), found in Cricetulus griseus (Chinese hamster).